The chain runs to 162 residues: Corticoliberin (162 aa).

The signal sequence occupies residues 1-24 (MKFQLWVSTGILLVSLLPCHECRA). A propeptide spanning residues 25–119 (FIKSPASSPG…QEDPTEKAKR (95 aa)) is cleaved from the precursor. The tract at residues 91-122 (SQPGMRAASLDGADSPYSAQEDPTEKAKRAEE) is disordered. Basic and acidic residues predominate over residues 113–122 (PTEKAKRAEE). Position 160 is an isoleucine amide (Ile160).

Belongs to the sauvagine/corticotropin-releasing factor/urotensin I family.

Its subcellular location is the secreted. In terms of biological role, this hormone from hypothalamus regulates the release of corticotropin from pituitary gland. The chain is Corticoliberin (crh) from Xenopus laevis (African clawed frog).